A 224-amino-acid chain; its full sequence is Urease accessory protein UreF (224 aa).

Belongs to the UreF family. As to quaternary structure, ureD, UreF and UreG form a complex that acts as a GTP-hydrolysis-dependent molecular chaperone, activating the urease apoprotein by helping to assemble the nickel containing metallocenter of UreC. The UreE protein probably delivers the nickel.

It is found in the cytoplasm. In terms of biological role, required for maturation of urease via the functional incorporation of the urease nickel metallocenter. This chain is Urease accessory protein UreF, found in Pseudomonas putida (strain W619).